The following is a 297-amino-acid chain: Putative phosphate permease MJ0630 (297 aa).

A run of 9 helical transmembrane segments spans residues 2–22, 45–65, 67–87, 99–119, 121–141, 154–174, 180–200, 225–245, and 274–294; these read ITIE…LFIL, LLIL…NVGS, VNSL…VMTL, TVII…YVFG, ILLS…ILYS, ITMI…NLGS, VLGT…FLCL, FIAQ…GMPV, and NIIF…FIIN.

It belongs to the inorganic phosphate transporter (PiT) (TC 2.A.20) family.

It is found in the cell membrane. Potential transporter for phosphate. In Methanocaldococcus jannaschii (strain ATCC 43067 / DSM 2661 / JAL-1 / JCM 10045 / NBRC 100440) (Methanococcus jannaschii), this protein is Putative phosphate permease MJ0630.